Consider the following 201-residue polypeptide: Ras-related protein Rab-9B (201 aa).

GTP contacts are provided by valine 18, glycine 19, lysine 20, serine 21, serine 22, aspartate 33, serine 34, alanine 36, histidine 38, and threonine 39. Serine 21 is a Mg(2+) binding site. The Switch 1 motif lies at 31 to 42; it reads KFDSQAFHTIGV. A Phosphoserine modification is found at serine 34. Mg(2+) contacts are provided by threonine 39 and aspartate 62. Residues 64 to 78 carry the Switch 2 motif; that stretch reads AGQERFKSLRTPFYR. The GTP site is built by glycine 65, asparagine 124, lysine 125, alanine 155, and lysine 156. S-geranylgeranyl cysteine attachment occurs at residues cysteine 200 and cysteine 201.

Belongs to the small GTPase superfamily. Rab family. As to quaternary structure, interacts (GTP-bound form) with SGSM1; the GDP-bound form has much lower affinity for SGSM1. The GTP-bound form but not the GDP-bound form interacts with HPS4 and the BLOC-3 complex (heterodimer of HPS1 and HPS4) but does not interact with HPS1 alone. Interacts (GTP-bound form) with NDE1. The cofactor is Mg(2+).

The protein localises to the cell membrane. Its subcellular location is the cytoplasmic vesicle. The protein resides in the phagosome membrane. The catalysed reaction is GTP + H2O = GDP + phosphate + H(+). With respect to regulation, regulated by guanine nucleotide exchange factors (GEFs) which promote the exchange of bound GDP for free GTP. Regulated by GTPase activating proteins (GAPs) which increase the GTP hydrolysis activity. Inhibited by GDP dissociation inhibitors (GDIs). The small GTPases Rab are key regulators of intracellular membrane trafficking, from the formation of transport vesicles to their fusion with membranes. Rabs cycle between an inactive GDP-bound form and an active GTP-bound form that is able to recruit to membranes different sets of downstream effectors directly responsible for vesicle formation, movement, tethering and fusion. RAB9B is involved in the transport of proteins between the endosomes and the trans Golgi network. May use NDE1/NDEL1 as an effector to interact with the dynein motor complex in order to control retrograde trafficking of RAB9-associated late endosomes to the TGN. The protein is Ras-related protein Rab-9B of Mus musculus (Mouse).